Consider the following 353-residue polypeptide: DNA polymerase IV (353 aa).

The region spanning 4–185 (IIHVDMDCFF…LPLSKIPGVG (182 aa)) is the UmuC domain. Mg(2+) is bound by residues Asp-8 and Asp-103. The active site involves Glu-104.

The protein belongs to the DNA polymerase type-Y family. As to quaternary structure, monomer. Mg(2+) serves as cofactor.

It is found in the cytoplasm. The enzyme catalyses DNA(n) + a 2'-deoxyribonucleoside 5'-triphosphate = DNA(n+1) + diphosphate. In terms of biological role, poorly processive, error-prone DNA polymerase involved in untargeted mutagenesis. Copies undamaged DNA at stalled replication forks, which arise in vivo from mismatched or misaligned primer ends. These misaligned primers can be extended by PolIV. Exhibits no 3'-5' exonuclease (proofreading) activity. May be involved in translesional synthesis, in conjunction with the beta clamp from PolIII. This chain is DNA polymerase IV, found in Serratia proteamaculans (strain 568).